The sequence spans 670 residues: MGETEKRIATHGVRCFSKIKMFLLALTCAYVSKSLSGIYMNSMLTQIERQFDIPTSIVGLINGSFEIGNLLLIILVSYFGTKLHRPIMIGIGCVIMGLGCFLMSLPHFLMGRYEYETTISPTSNLSSNSFLCMENRTQTLKPTQDPAECVKEMKSLMWIYVLVGNIIRGIGETPIMPLGISYIEDFAKSENSPLYIGILESGKMIGPIVGLLLGSFCARIYVDTGSVNTDDLTITPTDTRWVGAWWIGFLVCAGVNILTSIPFFFFPKTLPKEGLQDNVARTENDKEEKHREKAKEENRGITKDFLPFMKSLSCNPIYMLLILTSVLQINAFINMFTFLPKYLEQQYGKSTSEVVLLIGVCNLPPICIGYLLIGFIMKKFRITVKKAAYMAFCLSLFEYLLSYFHFMISCDNFQVAGLTTSYEGVQHPLYVENKVLADCNTRCSCLTNTWDPVCGDNGLSYMSACLAGCEKSVGMGTHMVFQNCSCIQSSGNSSAVLGLCKKGPECANKLQYFLIMSVIGSFIYSITAIPGYMVLLRCIKSEEKSLGIGLHAFCTRIFAGIPAPIYFGALIDRTCLHWGTLKCGEPGACRIYNINNFRRIYLVLPAALRGSSYLPAFFILILMRKFQLPGEMYSSETELADMKQTVKKSECTDVHGIPKVENDGELKTKL.

Topologically, residues 1-20 are cytoplasmic; sequence MGETEKRIATHGVRCFSKIK. A helical membrane pass occupies residues 21-40; sequence MFLLALTCAYVSKSLSGIYM. Residues 41–59 lie on the Extracellular side of the membrane; sequence NSMLTQIERQFDIPTSIVG. Residues 60–80 traverse the membrane as a helical segment; that stretch reads LINGSFEIGNLLLIILVSYFG. The Cytoplasmic segment spans residues 81-86; it reads TKLHRP. The chain crosses the membrane as a helical span at residues 87–111; that stretch reads IMIGIGCVIMGLGCFLMSLPHFLMG. The Extracellular segment spans residues 112 to 155; that stretch reads RYEYETTISPTSNLSSNSFLCMENRTQTLKPTQDPAECVKEMKS. 2 N-linked (GlcNAc...) asparagine glycosylation sites follow: asparagine 124 and asparagine 135. Residues 156–184 traverse the membrane as a helical segment; the sequence is LMWIYVLVGNIIRGIGETPIMPLGISYIE. Topologically, residues 185–203 are cytoplasmic; that stretch reads DFAKSENSPLYIGILESGK. The chain crosses the membrane as a helical span at residues 204–224; it reads MIGPIVGLLLGSFCARIYVDT. Over 225 to 242 the chain is Extracellular; it reads GSVNTDDLTITPTDTRWV. The chain crosses the membrane as a helical span at residues 243-267; the sequence is GAWWIGFLVCAGVNILTSIPFFFFP. At 268–311 the chain is on the cytoplasmic side; the sequence is KTLPKEGLQDNVARTENDKEEKHREKAKEENRGITKDFLPFMKS. A helical membrane pass occupies residues 312–333; sequence LSCNPIYMLLILTSVLQINAFI. Over 334–353 the chain is Extracellular; the sequence is NMFTFLPKYLEQQYGKSTSE. The chain crosses the membrane as a helical span at residues 354 to 377; the sequence is VVLLIGVCNLPPICIGYLLIGFIM. Residues 378-381 are Cytoplasmic-facing; that stretch reads KKFR. Residues 382–405 traverse the membrane as a helical segment; that stretch reads ITVKKAAYMAFCLSLFEYLLSYFH. Residues 406–513 are Extracellular-facing; that stretch reads FMISCDNFQV…PECANKLQYF (108 aa). The Kazal-like domain maps to 433 to 488; it reads NKVLADCNTRCSCLTNTWDPVCGDNGLSYMSACLAGCEKSVGMGTHMVFQNCSCIQ. 3 cysteine pairs are disulfide-bonded: cysteine 439–cysteine 469, cysteine 445–cysteine 465, and cysteine 454–cysteine 486. Asparagine 483 and asparagine 492 each carry an N-linked (GlcNAc...) asparagine glycan. Residues 514–536 traverse the membrane as a helical segment; sequence LIMSVIGSFIYSITAIPGYMVLL. The Cytoplasmic portion of the chain corresponds to 537-545; the sequence is RCIKSEEKS. A helical transmembrane segment spans residues 546 to 571; it reads LGIGLHAFCTRIFAGIPAPIYFGALI. Residues 572–605 are Extracellular-facing; the sequence is DRTCLHWGTLKCGEPGACRIYNINNFRRIYLVLP. Residues 606 to 623 form a helical membrane-spanning segment; it reads AALRGSSYLPAFFILILM. Topologically, residues 624–670 are cytoplasmic; it reads RKFQLPGEMYSSETELADMKQTVKKSECTDVHGIPKVENDGELKTKL.

It belongs to the organo anion transporter (TC 2.A.60) family. Expressed in brain, choroid plexus and lung, but not in liver or kidney.

The protein localises to the cell membrane. It is found in the basal cell membrane. The catalysed reaction is taurocholate(out) = taurocholate(in). The enzyme catalyses glycocholate(out) = glycocholate(in). It carries out the reaction taurochenodeoxycholate(out) = taurochenodeoxycholate(in). It catalyses the reaction tauroursodeoxycholate(out) = tauroursodeoxycholate(in). The catalysed reaction is 3,3',5'-triiodo-L-thyronine(out) = 3,3',5'-triiodo-L-thyronine(in). The enzyme catalyses L-thyroxine(out) = L-thyroxine(in). It carries out the reaction taurodeoxycholate(out) = taurodeoxycholate(in). It catalyses the reaction glycodeoxycholate(out) = glycodeoxycholate(in). The catalysed reaction is glycochenodeoxycholate(out) = glycochenodeoxycholate(in). The enzyme catalyses glycoursodeoxycholate(out) = glycoursodeoxycholate(in). It carries out the reaction estrone 3-sulfate(out) = estrone 3-sulfate(in). It catalyses the reaction prostaglandin E2(out) = prostaglandin E2(in). The catalysed reaction is substance P(out) = substance P(in). In terms of biological role, na(+)-independent transporter that mediates the cellular uptake of a broad range of organic anions such as the endogenous bile salts cholate and deoxycholate, either in their unconjugated or conjugated forms (taurocholate and glycocholate), estrone 3-sulfate and prostaglandin E2, at the plasma membrane. Responsible for intestinal absorption of bile acids. Capable of thyroid hormone transport (both T3 or 3,3',5'-triiodo-L-thyronine, and T4 or L-tyroxine). Plays roles in blood-brain and -cerebrospinal fluid barrier transport of organic anions and signal mediators, and in hormone uptake by neural cells. May also play a role in the reuptake of neuropeptides such as substance P/TAC1 and vasoactive intestinal peptide/VIP released from retinal neurons. Shows a pH-sensitive substrate specificity which may be ascribed to the protonation state of the binding site and leads to a stimulation of substrate transport in an acidic microenvironment. Hydrogencarbonate/HCO3(-) acts as the probable counteranion that exchanges for organic anions. May contribute to regulate the transport of organic compounds in testis across the blood-testis-barrier. The sequence is that of Solute carrier organic anion transporter family member 1A5 (Slco1a5) from Mus musculus (Mouse).